Here is a 95-residue protein sequence, read N- to C-terminus: Defensin-1 (95 aa).

The N-terminal stretch at 1 to 19 (MKIYFIVGLLFMAMVAIMA) is a signal peptide. A propeptide spanning residues 20 to 43 (APVEDEFEPLEHFENEERADRHRR) is cleaved from the precursor. 3 disulfide bridges follow: cysteine 46-cysteine 74, cysteine 60-cysteine 79, and cysteine 64-cysteine 81. The residue at position 94 (phenylalanine 94) is a Phenylalanine amide.

The protein localises to the secreted. Functionally, found in royal jelly and in hemolymph, potent antibacterial protein against Gram-positive bacteria at low concentration. The protein is Defensin-1 of Apis mellifera carnica (Carniolan honeybee).